A 650-amino-acid chain; its full sequence is DNA gyrase subunit B (650 aa).

The Toprim domain occupies 429–543; the sequence is NELFIVEGDS…AGYVYIAQPP (115 aa). E435, D508, and D510 together coordinate Mg(2+).

It belongs to the type II topoisomerase GyrB family. In terms of assembly, heterotetramer, composed of two GyrA and two GyrB chains. In the heterotetramer, GyrA contains the active site tyrosine that forms a transient covalent intermediate with DNA, while GyrB binds cofactors and catalyzes ATP hydrolysis. Requires Mg(2+) as cofactor. Mn(2+) is required as a cofactor. The cofactor is Ca(2+).

The protein resides in the cytoplasm. The enzyme catalyses ATP-dependent breakage, passage and rejoining of double-stranded DNA.. In terms of biological role, a type II topoisomerase that negatively supercoils closed circular double-stranded (ds) DNA in an ATP-dependent manner to modulate DNA topology and maintain chromosomes in an underwound state. Negative supercoiling favors strand separation, and DNA replication, transcription, recombination and repair, all of which involve strand separation. Also able to catalyze the interconversion of other topological isomers of dsDNA rings, including catenanes and knotted rings. Type II topoisomerases break and join 2 DNA strands simultaneously in an ATP-dependent manner. This Streptococcus pyogenes serotype M1 protein is DNA gyrase subunit B.